Reading from the N-terminus, the 43-residue chain is Cytochrome b559 subunit beta (43 aa).

The helical transmembrane segment at 18–34 (WLAVHGLAIPTVFFLGG) threads the bilayer. Histidine 22 contacts heme.

Belongs to the PsbE/PsbF family. As to quaternary structure, heterodimer of an alpha subunit and a beta subunit. PSII is composed of 1 copy each of membrane proteins PsbA, PsbB, PsbC, PsbD, PsbE, PsbF, PsbH, PsbI, PsbJ, PsbK, PsbL, PsbM, PsbT, PsbX, PsbY, PsbZ, Psb30/Ycf12, at least 3 peripheral proteins of the oxygen-evolving complex and a large number of cofactors. It forms dimeric complexes. Heme b serves as cofactor.

Its subcellular location is the plastid. It localises to the chloroplast thylakoid membrane. Functionally, this b-type cytochrome is tightly associated with the reaction center of photosystem II (PSII). PSII is a light-driven water:plastoquinone oxidoreductase that uses light energy to abstract electrons from H(2)O, generating O(2) and a proton gradient subsequently used for ATP formation. It consists of a core antenna complex that captures photons, and an electron transfer chain that converts photonic excitation into a charge separation. This is Cytochrome b559 subunit beta from Thalassiosira pseudonana (Marine diatom).